A 250-amino-acid polypeptide reads, in one-letter code: Bacteriorhodopsin-II (250 aa).

7 consecutive transmembrane segments (helical) span residues 14–34 (EGIW…YFMA), 49–69 (VITI…FFGF), 89–109 (YADW…LAGA), 114–134 (MASL…ATLM), 142–162 (AFWT…VVVV), 183–203 (IILV…EGLG), and 210–230 (ETLL…FILL). The residue at position 222 (Lys222) is an N6-(retinylidene)lysine.

It belongs to the archaeal/bacterial/fungal opsin family. In terms of processing, the covalent binding of retinal to the apoprotein, bacterioopsin, generates bacteriorhodopsin.

It is found in the membrane. Light-driven proton pump. In Haloarcula marismortui (strain ATCC 43049 / DSM 3752 / JCM 8966 / VKM B-1809) (Halobacterium marismortui), this protein is Bacteriorhodopsin-II (xop1).